We begin with the raw amino-acid sequence, 261 residues long: Tryptophan synthase alpha chain (261 aa).

Catalysis depends on proton acceptor residues E47 and D58.

The protein belongs to the TrpA family. In terms of assembly, tetramer of two alpha and two beta chains.

The enzyme catalyses (1S,2R)-1-C-(indol-3-yl)glycerol 3-phosphate + L-serine = D-glyceraldehyde 3-phosphate + L-tryptophan + H2O. Its pathway is amino-acid biosynthesis; L-tryptophan biosynthesis; L-tryptophan from chorismate: step 5/5. Its function is as follows. The alpha subunit is responsible for the aldol cleavage of indoleglycerol phosphate to indole and glyceraldehyde 3-phosphate. The chain is Tryptophan synthase alpha chain from Neisseria meningitidis serogroup A / serotype 4A (strain DSM 15465 / Z2491).